Consider the following 179-residue polypeptide: Ribulose bisphosphate carboxylase small subunit, chloroplastic 2 (179 aa).

The N-terminal 58 residues, 1-58 (MASSATMLSSVATAACVAPAQASMVAPFVGLKSASAFPVTQKTVTGLSTLPSNGGRVQ), are a transit peptide targeting the chloroplast.

Belongs to the RuBisCO small chain family. Heterohexadecamer of 8 large and 8 small subunits.

It localises to the plastid. The protein localises to the chloroplast. Its function is as follows. RuBisCO catalyzes two reactions: the carboxylation of D-ribulose 1,5-bisphosphate, the primary event in carbon dioxide fixation, as well as the oxidative fragmentation of the pentose substrate. Both reactions occur simultaneously and in competition at the same active site. Although the small subunit is not catalytic it is essential for maximal activity. This is Ribulose bisphosphate carboxylase small subunit, chloroplastic 2 from Fritillaria agrestis (Stinkbells).